The chain runs to 59 residues: Large ribosomal subunit protein bL32c (59 aa).

It belongs to the bacterial ribosomal protein bL32 family.

Its subcellular location is the plastid. The protein resides in the chloroplast. The polypeptide is Large ribosomal subunit protein bL32c (Physcomitrium patens (Spreading-leaved earth moss)).